The primary structure comprises 304 residues: Acetyl-coenzyme A carboxylase carboxyl transferase subunit beta (304 aa).

In terms of domain architecture, CoA carboxyltransferase N-terminal spans Leu29–Ser298. Positions 33, 36, 52, and 55 each coordinate Zn(2+). The C4-type zinc-finger motif lies at Cys33–Cys55.

It belongs to the AccD/PCCB family. As to quaternary structure, acetyl-CoA carboxylase is a heterohexamer composed of biotin carboxyl carrier protein (AccB), biotin carboxylase (AccC) and two subunits each of ACCase subunit alpha (AccA) and ACCase subunit beta (AccD). Requires Zn(2+) as cofactor.

The protein localises to the cytoplasm. It catalyses the reaction N(6)-carboxybiotinyl-L-lysyl-[protein] + acetyl-CoA = N(6)-biotinyl-L-lysyl-[protein] + malonyl-CoA. It functions in the pathway lipid metabolism; malonyl-CoA biosynthesis; malonyl-CoA from acetyl-CoA: step 1/1. Component of the acetyl coenzyme A carboxylase (ACC) complex. Biotin carboxylase (BC) catalyzes the carboxylation of biotin on its carrier protein (BCCP) and then the CO(2) group is transferred by the transcarboxylase to acetyl-CoA to form malonyl-CoA. The chain is Acetyl-coenzyme A carboxylase carboxyl transferase subunit beta from Gloeobacter violaceus (strain ATCC 29082 / PCC 7421).